An 895-amino-acid chain; its full sequence is Pyruvate dehydrogenase E1 component (895 aa).

The interval 1–20 (MSAVPEQILGASSANDADPQ) is disordered.

As to quaternary structure, homodimer. Part of the PDH complex, consisting of multiple copies of pyruvate dehydrogenase (E1), dihydrolipoamide acetyltransferase (E2) and lipoamide dehydrogenase (E3). It depends on thiamine diphosphate as a cofactor.

The catalysed reaction is N(6)-[(R)-lipoyl]-L-lysyl-[protein] + pyruvate + H(+) = N(6)-[(R)-S(8)-acetyldihydrolipoyl]-L-lysyl-[protein] + CO2. Component of the pyruvate dehydrogenase (PDH) complex, that catalyzes the overall conversion of pyruvate to acetyl-CoA and CO(2). The polypeptide is Pyruvate dehydrogenase E1 component (pdhA) (Cupriavidus necator (strain ATCC 17699 / DSM 428 / KCTC 22496 / NCIMB 10442 / H16 / Stanier 337) (Ralstonia eutropha)).